The primary structure comprises 230 residues: Probable septum site-determining protein MinC (230 aa).

Belongs to the MinC family. As to quaternary structure, interacts with MinD and FtsZ.

Cell division inhibitor that blocks the formation of polar Z ring septums. Rapidly oscillates between the poles of the cell to destabilize FtsZ filaments that have formed before they mature into polar Z rings. Prevents FtsZ polymerization. This Rhodopseudomonas palustris (strain BisA53) protein is Probable septum site-determining protein MinC.